The sequence spans 139 residues: Large ribosomal subunit protein uL16 (139 aa).

The segment covering 1 to 17 (MLMPKRVKYRKSQRGRM) has biased composition (basic residues). The segment at 1 to 24 (MLMPKRVKYRKSQRGRMKGNSGRG) is disordered.

It belongs to the universal ribosomal protein uL16 family. In terms of assembly, part of the 50S ribosomal subunit.

In terms of biological role, binds 23S rRNA and is also seen to make contacts with the A and possibly P site tRNAs. The polypeptide is Large ribosomal subunit protein uL16 (Chlorobium limicola (strain DSM 245 / NBRC 103803 / 6330)).